Consider the following 440-residue polypeptide: MENIQKLIARYPLVEDLVALKETTWFNPGATSLAQGLPYVGLTEQDVNAAHDRLARFAPYLAKAFPQTAAAGGMIESDVVAIPAMQKRLEKEYGQTIDGEMLLKKDSHLAISGSIKARGGIYEVLTHAEKLALEAGLLTTDDDYSVLLSPEFKQFFSQYSIAVGSTGNLGLSIGIMSACIGFKVTVHMSADARAWKKAKLRSHGVTVVEYEDDYGVAVEQGRKAAQSDPNCFFIDDENSRTLFLGYAVAGQRLKAQFAQQGRVVDASHPLFVYLPCGVGGGPGGVAFGLKLAFGDNVHCFFAEPTHSPCMLLGVYTGLHDAISVQDIGIDNLTAADGLAVGRASGFVGRAMERLLDGLYTLDDQTMYDMLGWLAQEEGIRLEPSALAGMAGPQRICAAVAYQQRHGFSQTQLGNATHLVWATGGGMVPEDEMEQYLAKGR.

Residue Lys-116 is modified to N6-(pyridoxal phosphate)lysine.

Belongs to the serine/threonine dehydratase family. DsdA subfamily. As to quaternary structure, monomer. Pyridoxal 5'-phosphate serves as cofactor.

The enzyme catalyses D-serine = pyruvate + NH4(+). The protein is D-serine dehydratase of Salmonella choleraesuis (strain SC-B67).